We begin with the raw amino-acid sequence, 188 residues long: UPF0200 protein YG5714_1176 (188 aa).

15 to 22 provides a ligand contact to ATP; the sequence is GMPGSGKS.

Belongs to the UPF0200 family.

This chain is UPF0200 protein YG5714_1176, found in Saccharolobus islandicus (strain Y.G.57.14 / Yellowstone #1) (Sulfolobus islandicus).